The sequence spans 807 residues: AP-5 complex subunit zeta-1 (807 aa).

As to quaternary structure, probably part of the adaptor protein complex 5 (AP-5) a tetramer composed of AP5B1, AP5M1, AP5S1 and AP5Z1. Interacts with ZFYVE26 and SPG11.

The protein localises to the cytoplasm. The protein resides in the nucleus. In terms of biological role, as part of AP-5, a probable fifth adaptor protein complex it may be involved in endosomal transport. According to PubMed:20613862 it is a putative helicase required for efficient homologous recombination DNA double-strand break repair. The protein is AP-5 complex subunit zeta-1 (AP5Z1) of Homo sapiens (Human).